Consider the following 699-residue polypeptide: Catalase-peroxidase (699 aa).

Residues 72-200 (WHSAGTYRIA…LAAVMMGLIY (129 aa)) constitute a cross-link (tryptophyl-tyrosyl-methioninium (Trp-Tyr) (with M-226)). His-73 functions as the Proton acceptor in the catalytic mechanism. The tryptophyl-tyrosyl-methioninium (Tyr-Met) (with W-72) cross-link spans 200-226 (YVNPEGVDGNPDPLKTAKDMRVTFARM). His-241 is a heme b binding site.

The protein belongs to the peroxidase family. Peroxidase/catalase subfamily. As to quaternary structure, homodimer or homotetramer. The cofactor is heme b. Post-translationally, formation of the three residue Trp-Tyr-Met cross-link is important for the catalase, but not the peroxidase activity of the enzyme.

It carries out the reaction H2O2 + AH2 = A + 2 H2O. The catalysed reaction is 2 H2O2 = O2 + 2 H2O. Bifunctional enzyme with both catalase and broad-spectrum peroxidase activity. The chain is Catalase-peroxidase from Aeromonas salmonicida (strain A449).